The following is an 887-amino-acid chain: MTSTNDIRRSFLDHFAKEGHELVPSAPLVPHNDPTLMFVNAGMVPFKNVFTGLEKRPYSTATSSQKCVRAGGKHNDLDNVGYTARHHTFFEMLGNFSFGDYFKERAISLAWSLITGTWGIPADRLTVTVFHTDDEAFDLWKKIGMPDSRIIRIPTSDNFWSMGDTGPCGPCSEIFYDHGAHIPGGPPGSPDEDGDRFVEIWNLVFMQYEQVDKETRIDLPRPSIDTGMGLERIAAVLQGVHDNYDTDTFKALIAASGELTRTATNGDFKASHRVIADHLRASGFLVADGVLPANEGRGYVLRRIMRRAMRHAHLLGAAEPLMHRLVPSLVAEMGAAYPELVRAQPLIEETLKLEETRFRQTLANGLRLLDEATGAMKPGDVLPGAVAFKLYDTFGFPYDLTEDALRAQDLGVDRSGFDAAMAEQKAAARAAWKGSGEKASDEVWFDIAEEFGGTEFTGYVSEEGDGQLLAIVKDGQRVAEAKAGDEVVLVTNQTPFYGESGGQMGDAGRITGDDGLEIAVEDTAKPLGRVHAHRGTVVSGSVRTGDALHLVVDGDRRTRIRANHSATHLLHAALRNRLGSHVTQKGSLVAADRFRFDFSHPKALTPEDIAAIEAEVNRHIRENDEVTTRLMTPDAAIEAGAMALFGEKYGDEVRVLSMGKAGRDLGAKSYSVELCGGTHVSALGDIALFKIISESAVSSGVRRIEALTGEAARQWLTQRDEKLKEAAAALKTAPDDVPARIAVLVEERRKLERELAEAKKALALGGGSKAEAAGPEDVAGVKFLPQVVDGLDPKGLRGLVDDAKASLGSGVSVIVAVNDGRASVAAGVTADLVDRISAVDLVKAAVAALGGQGGGGRPDMAQGGGPDGDKAADAVAAVRDALAKVPA.

4 residues coordinate Zn(2+): H564, H568, C675, and H679. Residues 851 to 866 (GQGGGGRPDMAQGGGP) show a composition bias toward gly residues. The tract at residues 851–871 (GQGGGGRPDMAQGGGPDGDKA) is disordered.

It belongs to the class-II aminoacyl-tRNA synthetase family. It depends on Zn(2+) as a cofactor.

The protein resides in the cytoplasm. The enzyme catalyses tRNA(Ala) + L-alanine + ATP = L-alanyl-tRNA(Ala) + AMP + diphosphate. Its function is as follows. Catalyzes the attachment of alanine to tRNA(Ala) in a two-step reaction: alanine is first activated by ATP to form Ala-AMP and then transferred to the acceptor end of tRNA(Ala). Also edits incorrectly charged Ser-tRNA(Ala) and Gly-tRNA(Ala) via its editing domain. In Rhizorhabdus wittichii (strain DSM 6014 / CCUG 31198 / JCM 15750 / NBRC 105917 / EY 4224 / RW1) (Sphingomonas wittichii), this protein is Alanine--tRNA ligase.